We begin with the raw amino-acid sequence, 218 residues long: Glutathione S-transferase class-mu 26 kDa isozyme (218 aa).

The region spanning 2 to 83 (SPILGYWKIK…YIADKHNMLG (82 aa)) is the GST N-terminal domain. Residues 7 to 8 (YW), 41 to 45 (WRNKK), 54 to 55 (NL), and 67 to 68 (QS) each bind glutathione. The GST C-terminal domain occupies 85–203 (CPKERAEISM…KSSKYIAWPL (119 aa)). Residue Y111 coordinates substrate.

The protein belongs to the GST superfamily. Mu family. Homodimer.

The enzyme catalyses RX + glutathione = an S-substituted glutathione + a halide anion + H(+). Conjugation of reduced glutathione to a wide number of exogenous and endogenous hydrophobic electrophiles. In terms of biological role, GST isoenzymes appear to play a central role in the parasite detoxification system. Other functions are also suspected including a role in increasing the solubility of haematin in the parasite gut. This Schistosoma japonicum (Blood fluke) protein is Glutathione S-transferase class-mu 26 kDa isozyme.